We begin with the raw amino-acid sequence, 390 residues long: GTPase Obg (390 aa).

Residues 1 to 159 (MKFVDEATIL…RDLQLELMLL (159 aa)) form the Obg domain. The interval 127–146 (NTRFKSSVNRTPRQKTMGTP) is disordered. Residues 129-143 (RFKSSVNRTPRQKTM) show a composition bias toward polar residues. One can recognise an OBG-type G domain in the interval 160 to 333 (ADVGMLGMPN…LCWDVMHFII (174 aa)). GTP-binding positions include 166-173 (GMPNAGKS), 191-195 (FTTLV), 213-216 (DIPG), 283-286 (NKID), and 314-316 (SAA). Mg(2+)-binding residues include S173 and T193. The segment covering 364–384 (MEAEAEEEWDDDWDEDDDEGV) has biased composition (acidic residues). Residues 364–390 (MEAEAEEEWDDDWDEDDDEGVEIVYQR) form a disordered region.

The protein belongs to the TRAFAC class OBG-HflX-like GTPase superfamily. OBG GTPase family. In terms of assembly, monomer. Requires Mg(2+) as cofactor.

It localises to the cytoplasm. In terms of biological role, an essential GTPase which binds GTP, GDP and possibly (p)ppGpp with moderate affinity, with high nucleotide exchange rates and a fairly low GTP hydrolysis rate. Plays a role in control of the cell cycle, stress response, ribosome biogenesis and in those bacteria that undergo differentiation, in morphogenesis control. In Cronobacter sakazakii (strain ATCC BAA-894) (Enterobacter sakazakii), this protein is GTPase Obg.